The chain runs to 473 residues: Photosystem II CP43 reaction center protein (473 aa).

The propeptide occupies 1–14; it reads MKTLYSLRRYYPVE. The residue at position 15 (T15) is an N-acetylthreonine. T15 is subject to Phosphothreonine. The next 5 membrane-spanning stretches (helical) occupy residues 69 to 93, 134 to 155, 178 to 200, 255 to 275, and 291 to 312; these read LFEV…PHLA, LIGP…KDKN, KASF…REIT, KPFA…LSYS, and WFNN…ASQA. E367 contacts [CaMn4O5] cluster. Residues 447-471 form a helical membrane-spanning segment; sequence RARAAAAGFEKGIDRDSEPVLSMTP.

This sequence belongs to the PsbB/PsbC family. PsbC subfamily. As to quaternary structure, PSII is composed of 1 copy each of membrane proteins PsbA, PsbB, PsbC, PsbD, PsbE, PsbF, PsbH, PsbI, PsbJ, PsbK, PsbL, PsbM, PsbT, PsbX, PsbY, PsbZ, Psb30/Ycf12, at least 3 peripheral proteins of the oxygen-evolving complex and a large number of cofactors. It forms dimeric complexes. Binds multiple chlorophylls and provides some of the ligands for the Ca-4Mn-5O cluster of the oxygen-evolving complex. It may also provide a ligand for a Cl- that is required for oxygen evolution. PSII binds additional chlorophylls, carotenoids and specific lipids. is required as a cofactor.

Its subcellular location is the plastid. It localises to the chloroplast thylakoid membrane. Its function is as follows. One of the components of the core complex of photosystem II (PSII). It binds chlorophyll and helps catalyze the primary light-induced photochemical processes of PSII. PSII is a light-driven water:plastoquinone oxidoreductase, using light energy to abstract electrons from H(2)O, generating O(2) and a proton gradient subsequently used for ATP formation. The chain is Photosystem II CP43 reaction center protein from Anthoceros angustus (Hornwort).